The primary structure comprises 86 residues: Small ribosomal subunit protein uS17 (86 aa).

This sequence belongs to the universal ribosomal protein uS17 family. In terms of assembly, part of the 30S ribosomal subunit.

One of the primary rRNA binding proteins, it binds specifically to the 5'-end of 16S ribosomal RNA. In Desulfitobacterium hafniense (strain DSM 10664 / DCB-2), this protein is Small ribosomal subunit protein uS17.